Reading from the N-terminus, the 4485-residue chain is Dynein gamma chain, flagellar outer arm (4485 aa).

The segment at Met-1–Glu-1780 is stem. Coiled-coil stretches lie at residues Ile-449 to Lys-469, Val-804 to Tyr-838, Val-1093 to Ile-1114, Asp-1275 to Leu-1297, and Lys-1699 to Thr-1727. 4 AAA regions span residues Tyr-1781 to Thr-2002, Lys-2061 to Lys-2279, Thr-2384 to Gly-2638, and Lys-2763 to Tyr-3013. ATP contacts are provided by residues Gly-1819–Thr-1826, Gly-2099–Ser-2106, Gly-2425–Thr-2432, and Gly-2802–Gln-2809. Coiled coils occupy residues Ala-3077–Gln-3099, Glu-3196–Glu-3227, Lys-3265–Glu-3343, and Glu-3569–Arg-3663. The segment at Ala-3077–Glu-3343 is stalk. 2 AAA regions span residues Leu-3412–Glu-3643 and Ala-3857–Asn-4071.

Belongs to the dynein heavy chain family. In terms of assembly, consists of at least 3 heavy chains (alpha, beta and gamma), 2 intermediate chains and 8 light chains.

Its subcellular location is the cell projection. It is found in the cilium. It localises to the flagellum. The protein resides in the cytoplasm. The protein localises to the cytoskeleton. Its subcellular location is the flagellum axoneme. Force generating protein of eukaryotic cilia and flagella. Produces force towards the minus ends of microtubules. Dynein has ATPase activity; the force-producing power stroke is thought to occur on release of ADP. The sequence is that of Dynein gamma chain, flagellar outer arm (ODA2) from Chlamydomonas reinhardtii (Chlamydomonas smithii).